The chain runs to 1044 residues: Isoleucine--tRNA ligase (1044 aa).

Residues 48-58 (PFATGLPHFGH) carry the 'HIGH' region motif. Residues 594–598 (KMSKS) carry the 'KMSKS' region motif. Residue Lys597 coordinates ATP.

This sequence belongs to the class-I aminoacyl-tRNA synthetase family. IleS type 2 subfamily. Monomer. Zn(2+) is required as a cofactor.

It is found in the cytoplasm. The enzyme catalyses tRNA(Ile) + L-isoleucine + ATP = L-isoleucyl-tRNA(Ile) + AMP + diphosphate. Functionally, catalyzes the attachment of isoleucine to tRNA(Ile). As IleRS can inadvertently accommodate and process structurally similar amino acids such as valine, to avoid such errors it has two additional distinct tRNA(Ile)-dependent editing activities. One activity is designated as 'pretransfer' editing and involves the hydrolysis of activated Val-AMP. The other activity is designated 'posttransfer' editing and involves deacylation of mischarged Val-tRNA(Ile). The polypeptide is Isoleucine--tRNA ligase (Borrelia hermsii (strain HS1 / DAH)).